Here is a 539-residue protein sequence, read N- to C-terminus: uncharacterized protein (539 aa).

ABC transporter domains are found at residues 8–265 and 307–537; these read VRIT…SRAL and IELD…IGDM. 339-346 is a binding site for ATP; sequence GDNGSGKS.

It belongs to the ABC transporter superfamily.

It is found in the mitochondrion. This is an uncharacterized protein from Saccharomyces cerevisiae (strain ATCC 204508 / S288c) (Baker's yeast).